The sequence spans 72 residues: Translation initiation factor IF-1 (72 aa).

Positions 1-72 constitute an S1-like domain; sequence MAKDGVIEVE…NRGRITYRYK (72 aa).

It belongs to the IF-1 family. In terms of assembly, component of the 30S ribosomal translation pre-initiation complex which assembles on the 30S ribosome in the order IF-2 and IF-3, IF-1 and N-formylmethionyl-tRNA(fMet); mRNA recruitment can occur at any time during PIC assembly.

It localises to the cytoplasm. Its function is as follows. One of the essential components for the initiation of protein synthesis. Stabilizes the binding of IF-2 and IF-3 on the 30S subunit to which N-formylmethionyl-tRNA(fMet) subsequently binds. Helps modulate mRNA selection, yielding the 30S pre-initiation complex (PIC). Upon addition of the 50S ribosomal subunit IF-1, IF-2 and IF-3 are released leaving the mature 70S translation initiation complex. The protein is Translation initiation factor IF-1 of Bifidobacterium adolescentis (strain ATCC 15703 / DSM 20083 / NCTC 11814 / E194a).